Consider the following 441-residue polypeptide: RNA-binding protein BRN1 (441 aa).

2 consecutive RRM domains span residues 18–99 (VKLF…YADG) and 106–186 (HKLF…WADT). Polar residues predominate over residues 258–273 (QPNQGNNNALQGTSPD). The interval 258-282 (QPNQGNNNALQGTSPDSVPPRLARR) is disordered. The 79-residue stretch at 349–427 (ANLFIYNIPR…KKLKVQLKRD (79 aa)) folds into the RRM 3 domain.

Highly expressed in stems and cauline leaves, and at lower levels in siliques, flowers, roots and rosette leaves.

It is found in the cytoplasm. Functionally, RNA-binding protein involved in the regulation of flowering time. Acts as a repressor of the activity of SOC1, a transcriptional activator of flowering time. Binds to the 3'-UTR of SOC1 mRNA in the cytoplasm and participates in SOC1 mRNA decay, mediated by the distal region of the SOC1 3'-UTR. Acts as a positive regulator of salicylic acid (SA)-mediated immunity. May act on SA signaling-related genes at a post-transcriptional level. This chain is RNA-binding protein BRN1, found in Arabidopsis thaliana (Mouse-ear cress).